A 600-amino-acid chain; its full sequence is UvrABC system protein C (600 aa).

The 86-residue stretch at 15–100 folds into the GIY-YIG domain; that stretch reads NSAGVYQYFN…IKQLHPKYNI (86 aa). One can recognise a UVR domain in the interval 203–238; it reads SILIKNLEKQMLVLAQNENYEEAAKVRDQIVTIKDL.

This sequence belongs to the UvrC family. In terms of assembly, interacts with UvrB in an incision complex.

The protein localises to the cytoplasm. The UvrABC repair system catalyzes the recognition and processing of DNA lesions. UvrC both incises the 5' and 3' sides of the lesion. The N-terminal half is responsible for the 3' incision and the C-terminal half is responsible for the 5' incision. This Campylobacter jejuni subsp. jejuni serotype O:6 (strain 81116 / NCTC 11828) protein is UvrABC system protein C.